A 267-amino-acid polypeptide reads, in one-letter code: 3-methyl-2-oxobutanoate hydroxymethyltransferase (267 aa).

Asp-45 and Asp-84 together coordinate Mg(2+). Residues 45 to 46 (DS), Asp-84, and Lys-113 contribute to the 3-methyl-2-oxobutanoate site. Glu-115 serves as a coordination point for Mg(2+). Catalysis depends on Glu-182, which acts as the Proton acceptor.

It belongs to the PanB family. In terms of assembly, homodecamer; pentamer of dimers. Requires Mg(2+) as cofactor.

It localises to the cytoplasm. The catalysed reaction is 3-methyl-2-oxobutanoate + (6R)-5,10-methylene-5,6,7,8-tetrahydrofolate + H2O = 2-dehydropantoate + (6S)-5,6,7,8-tetrahydrofolate. Its pathway is cofactor biosynthesis; coenzyme A biosynthesis. In terms of biological role, catalyzes the reversible reaction in which hydroxymethyl group from 5,10-methylenetetrahydrofolate is transferred onto alpha-ketoisovalerate to form ketopantoate. The sequence is that of 3-methyl-2-oxobutanoate hydroxymethyltransferase from Saccharolobus solfataricus (strain ATCC 35092 / DSM 1617 / JCM 11322 / P2) (Sulfolobus solfataricus).